A 356-amino-acid chain; its full sequence is Activating signal cointegrator 1 complex subunit 1 (356 aa).

Residues 1 to 52 are required for interaction with ASCC3; sequence MDVLRPQIVTFDGRNYRKNPIQEKQYQHEEDEDFYPDSMEYSDEPCGAYEVA. In terms of domain architecture, KH spans 57–119; sequence GFRATVSAPS…NGVVSARTRI (63 aa).

Identified in the ASCC complex that contains ASCC1, ASCC2 and ASCC3. Interacts directly with ASCC3. The ASCC complex interacts with ALKBH3. Part of the ASC-1 complex, that contains TRIP4, ASCC1, ASCC2 and ASCC3. Interacts with CSRP1. Interacts with ZCCHC4. As to expression, expressed in the spinal cord, brain, paraspinal ganglia, thyroid, and submandibular glands.

The protein resides in the nucleus. It localises to the nucleus speckle. Plays a role in DNA damage repair as component of the ASCC complex. Part of the ASC-1 complex that enhances NF-kappa-B, SRF and AP1 transactivation. In cells responding to gastrin-activated paracrine signals, it is involved in the induction of SERPINB2 expression by gastrin. May also play a role in the development of neuromuscular junction. The polypeptide is Activating signal cointegrator 1 complex subunit 1 (Ascc1) (Mus musculus (Mouse)).